Reading from the N-terminus, the 358-residue chain is COP9 signalosome complex subunit 5b (358 aa).

Met1 is subject to N-acetylmethionine. The 138-residue stretch at 59–196 (VKISALALLK…IGAFRTYSKG (138 aa)) folds into the MPN domain. Residues His142, His144, and Asp155 each contribute to the Zn(2+) site. A JAMM motif motif is present at residues 142–155 (HSHPGYGCWLSGID). Residues 338–349 (MRQSNNKSPTDS) are compositionally biased toward polar residues. Positions 338-358 (MRQSNNKSPTDSSDPDPMITY) are disordered.

Belongs to the peptidase M67A family. CSN5 subfamily. Component of the CSN complex, probably composed of CSN1, CSN2, CSN3, CSN4, CSN5 (CSN5A or CSN5B), CSN6 (CSN6A or CSN6B), CSN7 and CSN8. CSN5A or CSN5B are present within distinct CSN complexes each containing only one copy of CSN5. Interacts with itself. In the complex, it is located in the center and probably interacts directly with CSN4 and CSN6A or CSN6B. Also exists as monomeric form. Interacts with CYT1 in vitro and in planta. Interacts with FLZ3. A divalent metal cation serves as cofactor. In terms of tissue distribution, ubiquitously expressed. Highly expressed in flowers and roots. Expressed at lower level in seedlings and siliques.

It is found in the cytoplasm. It localises to the nucleus. Probable protease subunit of the COP9 signalosome complex (CSN), a complex involved in various cellular and developmental processes such as photomorphogenesis and auxin and jasmonate responses. The CSN complex is an essential regulator of the ubiquitin (Ubl) conjugation pathway by mediating the deneddylation of the cullin subunits of the SCF-type E3 ligase complexes, leading to decrease the Ubl ligase activity of SCF. In the complex, it probably acts as the catalytic center that mediates the cleavage of Nedd8 from cullins. It however has no metalloprotease activity by itself and requires the other subunits of the CSN complex. The CSN complex is involved in repression of photomorphogenesis in darkness by regulating the activity of COP1-containing Ubl ligase complexes. The complex is also required for degradation of PSIAA6 by regulating the activity of the Ubl ligase SCF-TIR complex. Not involved in CSN's deneddylation/derubylation activity. Essential for the structural integrity of the CSN holocomplex. This Arabidopsis thaliana (Mouse-ear cress) protein is COP9 signalosome complex subunit 5b.